An 881-amino-acid chain; its full sequence is Leucine--tRNA ligase (881 aa).

The short motif at 48-58 (PYPSGKLHMGH) is the 'HIGH' region element. The short motif at 638-642 (KMSKS) is the 'KMSKS' region element. Residue Lys641 participates in ATP binding.

It belongs to the class-I aminoacyl-tRNA synthetase family.

The protein resides in the cytoplasm. The catalysed reaction is tRNA(Leu) + L-leucine + ATP = L-leucyl-tRNA(Leu) + AMP + diphosphate. The chain is Leucine--tRNA ligase from Janthinobacterium sp. (strain Marseille) (Minibacterium massiliensis).